A 178-amino-acid polypeptide reads, in one-letter code: CASP-like protein 4D1 (178 aa).

A2 carries the post-translational modification N-acetylalanine. The Cytoplasmic portion of the chain corresponds to 2-14 (APPPPAPPSVTLR). A helical transmembrane segment spans residues 15–35 (TVLLLLRVLTAAFLLITVVLI). Over 36 to 60 (STNTVTLEISSTSIKLPFNDVYAYR) the chain is Extracellular. The helical transmembrane segment at 61 to 81 (YMLSAAVIGLVYAVVQLFLTI) threads the bilayer. Topologically, residues 82-97 (SQFATGKTHPLTYQFD) are cytoplasmic. The chain crosses the membrane as a helical span at residues 98–118 (FYGDKVISYLLATGSAAGFGV). The Extracellular segment spans residues 119 to 149 (SKDLKDTYIALIEFDSTDPVDKFFSKGYASA). A helical transmembrane segment spans residues 150–170 (SLLLFAFVSLAVLSVFSSLAL). Topologically, residues 171–178 (SKRPVPVS) are cytoplasmic.

This sequence belongs to the Casparian strip membrane proteins (CASP) family. As to quaternary structure, homodimer and heterodimers. As to expression, expressed in the root epidermis.

Its subcellular location is the cell membrane. The protein is CASP-like protein 4D1 of Arabidopsis thaliana (Mouse-ear cress).